The primary structure comprises 300 residues: N-carbamoylputrescine amidase (300 aa).

The region spanning 8 to 266 is the CN hydrolase domain; that stretch reads VTVAALQFAC…EAVLVAQFDL (259 aa). The active-site Proton acceptor is glutamate 47. Lysine 120 functions as the Proton donor in the catalytic mechanism. Catalysis depends on cysteine 157, which acts as the Nucleophile.

The protein belongs to the carbon-nitrogen hydrolase superfamily. In terms of assembly, homooctamer.

The catalysed reaction is N-carbamoylputrescine + H2O + 2 H(+) = putrescine + NH4(+) + CO2. Its pathway is amine and polyamine biosynthesis; putrescine biosynthesis via agmatine pathway; putrescine from N-carbamoylputrescine (amidase route): step 1/1. In terms of biological role, involved in polyamine biosynthesis. In Solanum tuberosum (Potato), this protein is N-carbamoylputrescine amidase (CPA).